The following is a 397-amino-acid chain: uncharacterized protein (397 aa).

This is an uncharacterized protein from Methanocaldococcus jannaschii (strain ATCC 43067 / DSM 2661 / JAL-1 / JCM 10045 / NBRC 100440) (Methanococcus jannaschii).